A 375-amino-acid chain; its full sequence is Chaperone protein DnaJ (375 aa).

The 66-residue stretch at 5 to 70 (DFYETLGVAK…QKRAAYDRYG (66 aa)) folds into the J domain. The CR-type zinc finger occupies 136 to 214 (GKTAQIRVPT…CHGQGRVTEE (79 aa)). The Zn(2+) site is built by cysteine 149, cysteine 152, cysteine 166, cysteine 169, cysteine 188, cysteine 191, cysteine 202, and cysteine 205. CXXCXGXG motif repeat units lie at residues 149 to 156 (CDVCSGSG), 166 to 173 (CGTCQGSG), 188 to 195 (CPTCHGRG), and 202 to 209 (CPKCHGQG).

The protein belongs to the DnaJ family. As to quaternary structure, homodimer. The cofactor is Zn(2+).

The protein localises to the cytoplasm. Functionally, participates actively in the response to hyperosmotic and heat shock by preventing the aggregation of stress-denatured proteins and by disaggregating proteins, also in an autonomous, DnaK-independent fashion. Unfolded proteins bind initially to DnaJ; upon interaction with the DnaJ-bound protein, DnaK hydrolyzes its bound ATP, resulting in the formation of a stable complex. GrpE releases ADP from DnaK; ATP binding to DnaK triggers the release of the substrate protein, thus completing the reaction cycle. Several rounds of ATP-dependent interactions between DnaJ, DnaK and GrpE are required for fully efficient folding. Also involved, together with DnaK and GrpE, in the DNA replication of plasmids through activation of initiation proteins. This chain is Chaperone protein DnaJ, found in Rhizobium etli (strain CIAT 652).